Reading from the N-terminus, the 1392-residue chain is FERM and PDZ domain-containing protein 2 (1392 aa).

The KIND domain occupies 15–197 (VTLASALQVR…SEVERRVVEE (183 aa)). The disordered stretch occupies residues 211–246 (SRLHQADGESPGAPASDALQPRRVSERSAETQSSLE). The FERM domain maps to 342–642 (CVVLLNGRCL…WFNAQTGSKH (301 aa)). One can recognise a PDZ 1 domain in the interval 775–861 (GLFGEPNQDI…MAVRMIQNSP (87 aa)). The tract at residues 903-930 (GRQSPHIHDQDRSVRGTEMAQGAGSCPP) is disordered. Residues 908–917 (HIHDQDRSVR) show a composition bias toward basic and acidic residues. An interaction with GRIN2A and GRIN2B region spans residues 937 to 1027 (TGEIYFVELV…VARLVLERRG (91 aa)). PDZ domains lie at 950-1035 (GTLG…PQCP) and 1079-1167 (RGLG…PEME). The tract at residues 1186-1236 (CAGSEQSPSLDQEDNWRDSTSLDAGEGLSPGPESSYKDVRQVKGDREKERP) is disordered. Over residues 1220–1236 (SYKDVRQVKGDREKERP) the composition is skewed to basic and acidic residues.

As to quaternary structure, interacts (via the second PDZ domain) with CTNND2 (via the extreme C-terminus). Interacts (via the second PDZ domain) with PKP4 (via the extreme C-terminus); the interaction directs FRMPD2 to the basolateral membranes. Interacts (via the second PDZ domain) with ARVCF (via the extreme C-terminus). Interacts (via the second PDZ domain) with NMDAR subunits GRIN2A/GLUN2A and GRIN2B/GLUN2B (via the extreme C-terminus); the interaction is direct and is likely to promote NMDAR-mediated neural signal transmission. Binds GRIN2A with lower affinity than GRIN2B. Interacts (via the third PDZ domain) with LRIT1 (via the extreme C-terminus); the interaction leads to their colocalization in photoreceptor synapses. Interacts with NOD2; the interaction is likely to trigger NOD2-mediated nuclear factor kappaB activation.

It is found in the cytoplasm. Its subcellular location is the postsynaptic density. The protein resides in the basolateral cell membrane. The protein localises to the cell junction. It localises to the tight junction. Functionally, functions as a scaffold protein and likely plays a role in N-methyl-D-aspartic acid receptor (NMDAR)-mediated synaptic excitatory transmission. May be involved in synapse formation in cone photoreceptor cells. May play a role in the regulation of tight junction formation. Binds phosphatidylinositol 3,4-bisphosphate (PtdIns(3,4)P2). May pNF-kappa-Blay a role in the regulation of NOD2-mediated NF-kappa-B activation in immune response. This is FERM and PDZ domain-containing protein 2 from Mus musculus (Mouse).